The primary structure comprises 88 residues: U1-hexatoxin-Iw1c (88 aa).

Residues 1–17 (LKFVVLICLVIMASTSA) form the signal peptide. Gln-18 is modified (pyrrolidone carboxylic acid). 5 disulfide bridges follow: Cys-20/Cys-31, Cys-25/Cys-39, Cys-30/Cys-65, Cys-49/Cys-73, and Cys-67/Cys-80. The propeptide occupies 86–88 (RSE).

The protein belongs to the MIT-like AcTx family. In terms of tissue distribution, expressed by the venom gland.

It localises to the secreted. In Illawarra wisharti (Illawarra funnel-web spider), this protein is U1-hexatoxin-Iw1c.